The following is a 689-amino-acid chain: Beta-adrenergic receptor kinase 1 (689 aa).

Positions 1–190 are N-terminal; sequence MADLEAVLAD…ELNIHLTMND (190 aa). The RGS domain occupies 54-175; it reads TFEKIFSQKL…IESEKFTRFC (122 aa). Residues 191-453 form the Protein kinase domain; sequence FSVHRIIGRG…AQEVKEDPFF (263 aa). Residues 197–205 and Lys220 each bind ATP; that span reads IGRGGFGEV. The active-site Proton acceptor is the Asp317. Residues 454 to 521 form the AGC-kinase C-terminal domain; it reads KAVDWQMVLL…TISERWQQEV (68 aa). The PH domain maps to 558-652; it reads DCIMHGYMSK…WKKELRDVYR (95 aa). Residues 665-689 form a disordered region; it reads KNKPRSPVVELSKMPLTQRGSANGL. Phosphoserine is present on Ser670.

The protein belongs to the protein kinase superfamily. AGC Ser/Thr protein kinase family. GPRK subfamily. As to quaternary structure, interacts with the heterodimer formed by GNB1 and GNG2. Interacts with GIT1. Interacts with, and phosphorylates chemokine-stimulated CCR5. Interacts with ARRB1. Interacts with LPAR1 and LPAR2. Interacts with RALA in response to LPAR1 activation. ADRBK1 and RALA mutually inhibit each other's binding to LPAR1. Interacts with ADRB2.

Its subcellular location is the cytoplasm. The protein localises to the cell membrane. It localises to the postsynapse. It is found in the presynapse. It catalyses the reaction [beta-adrenergic receptor] + ATP = [beta-adrenergic receptor]-phosphate + ADP + H(+). Its activity is regulated as follows. In contrast to other AGC family kinases, the catalytic activity is solely regulated by the binding of substrates and ligands, not by phosphorylation of the kinase domain. In terms of biological role, specifically phosphorylates the agonist-occupied form of the beta-adrenergic and closely related receptors, probably inducing a desensitization of them. Does not act on HTR1B/5-hydroxytryptamine 1B receptor. Key regulator of LPAR1 signaling. Competes with RALA for binding to LPAR1 thus affecting the signaling properties of the receptor. Desensitizes LPAR1 and LPAR2 in a phosphorylation-independent manner. Inhibits relaxation of airway smooth muscle in response to blue light. The protein is Beta-adrenergic receptor kinase 1 of Didelphis virginiana (North American opossum).